Here is a 410-residue protein sequence, read N- to C-terminus: Argininosuccinate synthase (410 aa).

Residues Ala11–Ser19 and Ala37 each bind ATP. Positions 88 and 93 each coordinate L-citrulline. An ATP-binding site is contributed by Ser116 to Asn124. Thr120, Asn124, and Asp125 together coordinate L-aspartate. Asn124 provides a ligand contact to L-citrulline. Positions 128, 181, 190, 269, and 281 each coordinate L-citrulline.

The protein belongs to the argininosuccinate synthase family. Type 1 subfamily. As to quaternary structure, homotetramer.

The protein resides in the cytoplasm. The enzyme catalyses L-citrulline + L-aspartate + ATP = 2-(N(omega)-L-arginino)succinate + AMP + diphosphate + H(+). It participates in amino-acid biosynthesis; L-arginine biosynthesis; L-arginine from L-ornithine and carbamoyl phosphate: step 2/3. This Schizosaccharomyces pombe (strain 972 / ATCC 24843) (Fission yeast) protein is Argininosuccinate synthase (arg12).